The chain runs to 483 residues: Glutamyl-tRNA(Gln) amidotransferase subunit A (483 aa).

Active-site charge relay system residues include K76 and S151. S175 (acyl-ester intermediate) is an active-site residue.

The protein belongs to the amidase family. GatA subfamily. In terms of assembly, heterotrimer of A, B and C subunits.

The enzyme catalyses L-glutamyl-tRNA(Gln) + L-glutamine + ATP + H2O = L-glutaminyl-tRNA(Gln) + L-glutamate + ADP + phosphate + H(+). Its function is as follows. Allows the formation of correctly charged Gln-tRNA(Gln) through the transamidation of misacylated Glu-tRNA(Gln) in organisms which lack glutaminyl-tRNA synthetase. The reaction takes place in the presence of glutamine and ATP through an activated gamma-phospho-Glu-tRNA(Gln). This is Glutamyl-tRNA(Gln) amidotransferase subunit A from Chromobacterium violaceum (strain ATCC 12472 / DSM 30191 / JCM 1249 / CCUG 213 / NBRC 12614 / NCIMB 9131 / NCTC 9757 / MK).